Consider the following 624-residue polypeptide: Atypical kinase COQ8B, mitochondrial (624 aa).

Positions 90 to 117 are disordered; sequence EMPPDFSSKDGRGETSETPVGAATGTIK. The chain crosses the membrane as a helical span at residues 189–205; that stretch reads LANFGGLAVGLGIGAIA. The KxGQ motif signature appears at 249–252; the sequence is KIGQ. A Protein kinase domain is found at 285 to 517; it reads MHKVLEEELG…ATVLKKSKDL (233 aa). Positions 310-313 match the AAAS motif motif; sequence AAAS. Residues serine 313, lysine 331, and 418–421 contribute to the ATP site; that span reads MELV. Aspartate 461 (proton acceptor) is an active-site residue. ATP contacts are provided by asparagine 466 and aspartate 480.

Belongs to the protein kinase superfamily. ADCK protein kinase family. Homodimer; homodimerizes via its transmembrane region. Interacts with the multi-subunit COQ enzyme complex.

It is found in the mitochondrion membrane. It localises to the cytoplasm. The protein localises to the cytosol. The protein resides in the cell membrane. Its pathway is cofactor biosynthesis; ubiquinone biosynthesis. Atypical kinase involved in the biosynthesis of coenzyme Q, also named ubiquinone, an essential lipid-soluble electron transporter for aerobic cellular respiration. Its substrate specificity is still unclear: may act as a protein kinase that mediates phosphorylation of COQ3. According to other reports, acts as a small molecule kinase, possibly a lipid kinase that phosphorylates a prenyl lipid in the ubiquinone biosynthesis pathway, as suggested by its ability to bind coenzyme Q lipid intermediates. However, the small molecule kinase activity was not confirmed by another publication. Required for podocyte migration. This chain is Atypical kinase COQ8B, mitochondrial, found in Danio rerio (Zebrafish).